A 149-amino-acid polypeptide reads, in one-letter code: MKYQQLENLECGWKWQYLINKWKDGETITKYIDSSEADHAVSELRKLEHEPTKVLEWIDLHMAEELDKKLKQAIRGKRKRHFNAEQIHTKKKSIDLDYRVWEKLSTRANELGCTLSDAIEYLLSEASRSEKASAAVSTLKEDLSKLLSD.

Belongs to the MatP family. Homodimer.

The protein localises to the cytoplasm. Its function is as follows. Required for spatial organization of the terminus region of the chromosome (Ter macrodomain) during the cell cycle. Prevents early segregation of duplicated Ter macrodomains during cell division. Binds specifically to matS, which is a 13 bp signature motif repeated within the Ter macrodomain. This chain is Macrodomain Ter protein, found in Vibrio vulnificus (strain CMCP6).